The following is a 195-amino-acid chain: Putative archaetidylserine decarboxylase proenzyme (195 aa).

S159 functions as the Schiff-base intermediate with substrate; via pyruvic acid in the catalytic mechanism. Pyruvic acid (Ser); by autocatalysis is present on S159.

The protein belongs to the phosphatidylserine decarboxylase family. PSD-A subfamily. In terms of assembly, heterodimer of a large membrane-associated beta subunit and a small pyruvoyl-containing alpha subunit. Pyruvate serves as cofactor. Is synthesized initially as an inactive proenzyme. Formation of the active enzyme involves a self-maturation process in which the active site pyruvoyl group is generated from an internal serine residue via an autocatalytic post-translational modification. Two non-identical subunits are generated from the proenzyme in this reaction, and the pyruvate is formed at the N-terminus of the alpha chain, which is derived from the carboxyl end of the proenzyme. The autoendoproteolytic cleavage occurs by a canonical serine protease mechanism, in which the side chain hydroxyl group of the serine supplies its oxygen atom to form the C-terminus of the beta chain, while the remainder of the serine residue undergoes an oxidative deamination to produce ammonia and the pyruvoyl prosthetic group on the alpha chain. During this reaction, the Ser that is part of the protease active site of the proenzyme becomes the pyruvoyl prosthetic group, which constitutes an essential element of the active site of the mature decarboxylase. Post-translationally, is synthesized initially as an inactive proenzyme. Formation of the active enzyme involves a self-maturation process in which the active site pyruvoyl group is generated from an internal serine residue via an autocatalytic post-translational modification. Two non-identical subunits are generated from the proenzyme in this reaction, and the pyruvate is formed at the N-terminus of the alpha chain, which is derived from the carboxyl end of the proenzyme. The post-translation cleavage follows an unusual pathway, termed non-hydrolytic serinolysis, in which the side chain hydroxyl group of the serine supplies its oxygen atom to form the C-terminus of the beta chain, while the remainder of the serine residue undergoes an oxidative deamination to produce ammonia and the pyruvoyl prosthetic group on the alpha chain.

It is found in the cell membrane. It carries out the reaction archaetidylserine + H(+) = archaetidylethanolamine + CO2. Its function is as follows. Catalyzes the formation of archaetidylethanolamine (PtdEtn) from archaetidylserine (PtdSer). This Archaeoglobus fulgidus (strain ATCC 49558 / DSM 4304 / JCM 9628 / NBRC 100126 / VC-16) protein is Putative archaetidylserine decarboxylase proenzyme.